We begin with the raw amino-acid sequence, 182 residues long: NADH-quinone oxidoreductase subunit I (182 aa).

4Fe-4S ferredoxin-type domains follow at residues 52 to 82 (LTRDPDGEERCVACNLCAVACPVGCISLQKA) and 92 to 121 (DFFRINFSRCIFCGLCEEACPTTAIQLTPD). [4Fe-4S] cluster contacts are provided by Cys62, Cys65, Cys68, Cys72, Cys101, Cys104, Cys107, and Cys111.

This sequence belongs to the complex I 23 kDa subunit family. NDH-1 is composed of 13 different subunits. Subunits NuoA, H, J, K, L, M, N constitute the membrane sector of the complex. It depends on [4Fe-4S] cluster as a cofactor.

It localises to the cell inner membrane. It carries out the reaction a quinone + NADH + 5 H(+)(in) = a quinol + NAD(+) + 4 H(+)(out). Functionally, NDH-1 shuttles electrons from NADH, via FMN and iron-sulfur (Fe-S) centers, to quinones in the respiratory chain. The immediate electron acceptor for the enzyme in this species is believed to be ubiquinone. Couples the redox reaction to proton translocation (for every two electrons transferred, four hydrogen ions are translocated across the cytoplasmic membrane), and thus conserves the redox energy in a proton gradient. This is NADH-quinone oxidoreductase subunit I from Pseudomonas syringae pv. syringae (strain B728a).